Reading from the N-terminus, the 445-residue chain is Histamine H3 receptor (445 aa).

The Extracellular segment spans residues 1–39 (MERAPPDGLMNASGTLAGEAAAAGGARGFSAAWTAVLAA). An N-linked (GlcNAc...) asparagine glycan is attached at Asn-11. Residues 40 to 60 (LMALLIVATVLGNALVMLAFV) traverse the membrane as a helical segment. Residues 61 to 70 (ADSSLRTQNN) are Cytoplasmic-facing. The helical transmembrane segment at 71-91 (FFLLNLAISDFLVGAFCIPLY) threads the bilayer. At 92 to 108 (VPYVLTGRWTFGRGLCK) the chain is on the extracellular side. A disulfide bridge links Cys-107 with Cys-188. Residues 109-129 (LWLVVDYLLCASSVFNIVLIS) form a helical membrane-spanning segment. The Cytoplasmic segment spans residues 130 to 156 (YDRFLSVTRAVSYRAQQGDTRRAVRKM). A helical membrane pass occupies residues 157–177 (ALVWVLAFLLYGPAILSWEYL). Residues 178-196 (SGGSSIPEGHCYAEFFYNW) are Extracellular-facing. A helical transmembrane segment spans residues 197 to 217 (YFLITASTLEFFTPFLSVTFF). The Cytoplasmic segment spans residues 218 to 359 (NLSIYLNIQR…LSRDKKVAKS (142 aa)). Disordered regions lie at residues 234–259 (DGGR…PSCW) and 286–336 (AGEA…LEKR). Residues 241–256 (PEPPPDAQPSPPPAPP) are compositionally biased toward pro residues. Positions 290–299 (ALGGGSGGGA) are enriched in gly residues. The segment covering 300–312 (AASPTSSSGSSSR) has biased composition (low complexity). Residues 360–380 (LAIIVSIFGLCWAPYTLLMII) traverse the membrane as a helical segment. Over 381–396 (RAACHGRCIPDYWYET) the chain is Extracellular. The chain crosses the membrane as a helical span at residues 397 to 417 (SFWLLWANSAVNPVLYPLCHY). The Cytoplasmic segment spans residues 418 to 445 (SFRRAFTKLLCPQKLKVQPHGSLEQCWK). Residue Ser-439 is modified to Phosphoserine.

It belongs to the G-protein coupled receptor 1 family. As to expression, expressed abundantly in brain, most notably throughout the thalamus, the ventromedial hypothalamus and the caudate nucleus. Isoform 1 is largely predominant in all tissues.

The protein resides in the cell membrane. In terms of biological role, the H3 subclass of histamine receptors could mediate the histamine signals in CNS and peripheral nervous system. Signals through the inhibition of adenylate cyclase and displays high constitutive activity (spontaneous activity in the absence of agonist). The chain is Histamine H3 receptor (Hrh3) from Rattus norvegicus (Rat).